The sequence spans 539 residues: Bifunctional purine biosynthesis protein PurH (539 aa).

The MGS-like domain occupies 8-159; that stretch reads FPIPDLHRVR…KNYAYTGVVT (152 aa).

It belongs to the PurH family.

The catalysed reaction is (6R)-10-formyltetrahydrofolate + 5-amino-1-(5-phospho-beta-D-ribosyl)imidazole-4-carboxamide = 5-formamido-1-(5-phospho-D-ribosyl)imidazole-4-carboxamide + (6S)-5,6,7,8-tetrahydrofolate. It catalyses the reaction IMP + H2O = 5-formamido-1-(5-phospho-D-ribosyl)imidazole-4-carboxamide. It functions in the pathway purine metabolism; IMP biosynthesis via de novo pathway; 5-formamido-1-(5-phospho-D-ribosyl)imidazole-4-carboxamide from 5-amino-1-(5-phospho-D-ribosyl)imidazole-4-carboxamide (10-formyl THF route): step 1/1. The protein operates within purine metabolism; IMP biosynthesis via de novo pathway; IMP from 5-formamido-1-(5-phospho-D-ribosyl)imidazole-4-carboxamide: step 1/1. In Bartonella tribocorum (strain CIP 105476 / IBS 506), this protein is Bifunctional purine biosynthesis protein PurH.